The chain runs to 77 residues: Translational regulator CsrA (77 aa).

The protein belongs to the CsrA/RsmA family. As to quaternary structure, homodimer; the beta-strands of each monomer intercalate to form a hydrophobic core, while the alpha-helices form wings that extend away from the core.

It is found in the cytoplasm. Its function is as follows. A translational regulator that binds mRNA to regulate translation initiation and/or mRNA stability. Usually binds in the 5'-UTR at or near the Shine-Dalgarno sequence preventing ribosome-binding, thus repressing translation. Its main target seems to be the major flagellin gene, while its function is anatagonized by FliW. This is Translational regulator CsrA from Pseudarthrobacter chlorophenolicus (strain ATCC 700700 / DSM 12829 / CIP 107037 / JCM 12360 / KCTC 9906 / NCIMB 13794 / A6) (Arthrobacter chlorophenolicus).